A 378-amino-acid polypeptide reads, in one-letter code: Putative zinc finger protein 302L (378 aa).

The C2H2-type; degenerate zinc finger occupies 3–25 (IVCEFCDKSFDSKSKVNAHQRTK).

This sequence belongs to the IIV-6 302L family.

The protein is Putative zinc finger protein 302L of Invertebrate iridescent virus 6 (IIV-6).